The primary structure comprises 253 residues: Ras-like protein family member 11A-like (253 aa).

GTP is bound by residues 43-50 (GASNVGKT), 90-97 (DTPCVSLQ), and 157-160 (NKSD). The segment at 213–233 (GNGEKRKGGLHLARPKSPNMQ) is disordered.

Belongs to the small GTPase superfamily. Ras family.

The protein localises to the nucleus. It localises to the nucleolus. The enzyme catalyses GTP + H2O = GDP + phosphate + H(+). Its function is as follows. Regulator of rDNA transcription. The polypeptide is Ras-like protein family member 11A-like (Danio rerio (Zebrafish)).